A 446-amino-acid polypeptide reads, in one-letter code: Maltoporin (446 aa).

The first 25 residues, Met1–Ala25, serve as a signal peptide directing secretion.

This sequence belongs to the porin LamB (TC 1.B.3) family. In terms of assembly, homotrimer formed of three 18-stranded antiparallel beta-barrels, containing three independent channels.

It is found in the cell outer membrane. It catalyses the reaction beta-maltose(in) = beta-maltose(out). Involved in the transport of maltose and maltodextrins. This chain is Maltoporin, found in Escherichia coli O6:K15:H31 (strain 536 / UPEC).